Reading from the N-terminus, the 255-residue chain is Small ribosomal subunit protein uS2 (255 aa).

This sequence belongs to the universal ribosomal protein uS2 family.

The protein is Small ribosomal subunit protein uS2 of Streptococcus pyogenes serotype M49 (strain NZ131).